The chain runs to 1382 residues: Eukaryotic translation initiation factor 3 subunit A (1382 aa).

Residue K68 is modified to N6-acetyllysine. Residues 82-120 (NIKSLEDVVRAYLKMAEEKTEAAKEESQQMVLDIEDLDN) are a coiled coil. In terms of domain architecture, PCI spans 315–498 (MQRMSTRVLL…RTLSFGSDLN (184 aa)). Phosphoserine occurs at positions 492 and 584. The interaction with EIF3B stretch occupies residues 664–835 (LDPDFIMAKQ…REERERAERA (172 aa)). Disordered stretches follow at residues 810–844 (KEEE…LREY) and 866–1382 (EERE…TVRR). 3 stretches are compositionally biased toward basic and acidic residues: residues 866-1165 (EERE…DDSR), 1177-1328 (GWRE…DPPR), and 1336-1371 (SRDR…TKNE). S881, S882, and S895 each carry phosphoserine. The stretch at 925–934 (DEDRSHRRDE) is repeat 1. Positions 925 to 1172 (DEDRSHRRDE…DSRPGPWRPL (248 aa)) are 25 X 10 AA approximate tandem repeats of [DE]-[DE]-[DE]-R-[SEVGFPILV]-[HPSN]-[RSW]-[RL]-[DRGTIHN]-[EPMANLGDT]. A 2; truncated repeat occupies 935 to 942 (ERPRRLGD). A run of 20 repeats spans residues 943–952 (DEDREPSLRP), 953–962 (DDDRVPRRGM), 963–972 (DDDRGPRRGP), 973–982 (EEDRFSRRGA), 983–992 (DDDRPSWRNT), 993–1002 (DDDRPPRRIA), 1003–1012 (DEDRGNWRHA), 1013–1022 (DDDRPPRRGL), 1023–1032 (DEDRGSWRTA), 1033–1042 (DEDRGPRRGM), 1043–1052 (DDDRGPRRGG), 1054–1063 (DDERSSWRNA), 1064–1073 (DDDRGPRRGL), 1074–1083 (DDDRGPRRGM), 1084–1093 (DDDRGPRRGM), 1094–1103 (DDDRGPRRGM), 1104–1113 (DDDRGPRRGL), 1114–1123 (DDDRGPWRNA), 1124–1133 (DDDRIPRRGA), and 1134–1143 (EDDRGPWRNM). At S949 the chain carries Phosphoserine. Residue S1028 is modified to Phosphoserine. One copy of the 23; truncated repeat lies at 1144–1152 (DDDRLSRRA). Repeat 24 spans residues 1153–1162 (DDDRFPRRGD). A 25; approximate repeat occupies 1163–1172 (DSRPGPWRPL). 5 positions are modified to phosphoserine: S1188, S1198, S1262, S1336, and S1364.

As to quaternary structure, interacts with EIF4G1. Component of the eukaryotic translation initiation factor 3 (eIF-3) complex, which is composed of 13 subunits: EIF3A, EIF3B, EIF3C, EIF3D, EIF3E, EIF3F, EIF3G, EIF3H, EIF3I, EIF3J, EIF3K, EIF3L and EIF3M. The eIF-3 complex appears to include 3 stable modules: module A is composed of EIF3A, EIF3B, EIF3G and EIF3I; module B is composed of EIF3F, EIF3H, and EIF3M; and module C is composed of EIF3C, EIF3D, EIF3E, EIF3L and EIF3K. EIF3C of module C binds EIF3B of module A and EIF3H of module B, thereby linking the three modules. EIF3J is a labile subunit that binds to the eIF-3 complex via EIF3B. The eIF-3 complex interacts with RPS6KB1 under conditions of nutrient depletion. Mitogenic stimulation leads to binding and activation of a complex composed of MTOR and RPTOR, leading to phosphorylation and release of RPS6KB1 and binding of EIF4B to eIF-3. Also interacts with KRT7 and PIWIL2. Post-translationally, phosphorylated. Phosphorylation is enhanced upon serum stimulation.

The protein localises to the cytoplasm. Functionally, RNA-binding component of the eukaryotic translation initiation factor 3 (eIF-3) complex, which is required for several steps in the initiation of protein synthesis. The eIF-3 complex associates with the 40S ribosome and facilitates the recruitment of eIF-1, eIF-1A, eIF-2:GTP:methionyl-tRNAi and eIF-5 to form the 43S pre-initiation complex (43S PIC). The eIF-3 complex stimulates mRNA recruitment to the 43S PIC and scanning of the mRNA for AUG recognition. The eIF-3 complex is also required for disassembly and recycling of post-termination ribosomal complexes and subsequently prevents premature joining of the 40S and 60S ribosomal subunits prior to initiation. The eIF-3 complex specifically targets and initiates translation of a subset of mRNAs involved in cell proliferation, including cell cycling, differentiation and apoptosis, and uses different modes of RNA stem-loop binding to exert either translational activation or repression. (Microbial infection) Essential for the initiation of translation on type-1 viral ribosomal entry sites (IRESs), like for HCV, PV, EV71 or BEV translation. Its function is as follows. (Microbial infection) In case of FCV infection, plays a role in the ribosomal termination-reinitiation event leading to the translation of VP2. The chain is Eukaryotic translation initiation factor 3 subunit A from Homo sapiens (Human).